A 458-amino-acid polypeptide reads, in one-letter code: MRGPAVLLTVALATLLAPGAGAPVQSQGSQNKLLLVSFDGFRWNYDQDVDTPNLDAMARDGVKARYMTPAFVTMTSPCHFTLVTGKYIENHGVVHNMYYNTTSKVKLPYHATLGIQRWWDNGSVPIWITAQRQGLRAGSFFYPGGNVTYQGVAVTRSRKEGIAHNYKNETEWRANIDTVMAWFTEEDLDLVTLYFGEPDSTGHRYGPESPERREMVRQVDRTVGYLRESIARNHLTDRLNLIITSDHGMTTVDKRAGDLVEFHKFPNFTFRDIEFELLDYGPNGMLLPKEGRLEKVYDALKDAHPKLHVYKKEAFPEAFHYANNPRVTPLLMYSDLGYVIHGRINVQFNNGEHGFDNKDMDMKTIFRAVGPSFRAGLEVEPFESVHVYELMCRLLGIVPEANDGHLATLLPMLHTESALPPDGRPTLLPKGRSALPPSSRPLLVMGLLGTVILLSEVA.

Positions 1–21 (MRGPAVLLTVALATLLAPGAG) are cleaved as a signal peptide. Over 22–433 (APVQSQGSQN…RPTLLPKGRS (412 aa)) the chain is Extracellular. Residues Asp-39 and Thr-75 each contribute to the Zn(2+) site. The interval 72 to 78 (VTMTSPC) is required for enzyme activity. The active-site Nucleophile is the Thr-75. Asn-96 contributes to the substrate binding site. N-linked (GlcNAc...) asparagine glycosylation is found at Asn-100, Asn-121, Asn-146, and Asn-168. Positions 199, 203, 246, and 247 each coordinate Zn(2+). Asn-267 carries an N-linked (GlcNAc...) asparagine glycan. Residue His-353 coordinates Zn(2+). Residues 434 to 454 (ALPPSSRPLLVMGLLGTVILL) traverse the membrane as a helical segment. The Cytoplasmic segment spans residues 455 to 458 (SEVA).

This sequence belongs to the nucleotide pyrophosphatase/phosphodiesterase family. Zn(2+) serves as cofactor. Post-translationally, N-glycosylated; required for activity and transport to the plasma membrane. In terms of tissue distribution, detected in the colon (at protein level). Expressed in the duodenum, jejunum and liver and at low levels in the ileum. Expression was very low in the esophagus, stomach and colon.

The protein localises to the cell membrane. The catalysed reaction is a sphingomyelin + H2O = phosphocholine + an N-acylsphing-4-enine + H(+). It carries out the reaction 1-hexadecanoyl-sn-glycero-3-phosphocholine + H2O = 1-hexadecanoyl-sn-glycerol + phosphocholine + H(+). It catalyses the reaction a 1-O-alkyl-2-acetyl-sn-glycero-3-phosphocholine + H2O = a 1-O-alkyl-2-acetyl-sn-glycerol + phosphocholine + H(+). The enzyme catalyses 1-O-octadecyl-2-acetyl-sn-glycero-3-phosphocholine + H2O = 1-O-octadecyl-2-acetyl-sn-glycerol + phosphocholine + H(+). With respect to regulation, inhibited in a dose dependent manner by ATP, imidazole, orthovanadate and zinc ion. Not inhibited by ADP, AMP and EDTA. Choline-specific phosphodiesterase that hydrolyzes sphingomyelin releasing the ceramide and phosphocholine and therefore is involved in sphingomyelin digestion, ceramide formation, and fatty acid (FA) absorption in the gastrointestinal tract. Also has phospholipase C activity and can also cleave phosphocholine from palmitoyl lyso-phosphatidylcholine and platelet-activating factor (PAF) leading to its inactivation. Does not have nucleotide pyrophosphatase activity. May promote cholesterol absorption by affecting the levels of sphingomyelin derived from either diet or endogenous sources, in the intestinal lumen. The chain is Ectonucleotide pyrophosphatase/phosphodiesterase family member 7 from Homo sapiens (Human).